We begin with the raw amino-acid sequence, 313 residues long: tRNA dimethylallyltransferase (313 aa).

10–17 (GPTASGKT) lines the ATP pocket. Position 12–17 (12–17 (TASGKT)) interacts with substrate. 3 interaction with substrate tRNA regions span residues 35 to 38 (DSAM), 159 to 163 (QRIQR), and 240 to 245 (RCVGYR).

This sequence belongs to the IPP transferase family. As to quaternary structure, monomer. It depends on Mg(2+) as a cofactor.

It carries out the reaction adenosine(37) in tRNA + dimethylallyl diphosphate = N(6)-dimethylallyladenosine(37) in tRNA + diphosphate. Functionally, catalyzes the transfer of a dimethylallyl group onto the adenine at position 37 in tRNAs that read codons beginning with uridine, leading to the formation of N6-(dimethylallyl)adenosine (i(6)A). The polypeptide is tRNA dimethylallyltransferase (Legionella pneumophila subsp. pneumophila (strain Philadelphia 1 / ATCC 33152 / DSM 7513)).